The sequence spans 507 residues: Arabinose import ATP-binding protein AraG (507 aa).

ABC transporter domains are found at residues 14–249 and 249–505; these read LRFN…MVGR and RDIQ…LPRT. 46 to 53 is a binding site for ATP; the sequence is GENGAGKS.

Belongs to the ABC transporter superfamily. Arabinose importer (TC 3.A.1.2.2) family. In terms of assembly, the complex is composed of two ATP-binding proteins (AraG), two transmembrane proteins (AraH) and a solute-binding protein (AraF).

The protein resides in the cell inner membrane. The enzyme catalyses L-arabinose(out) + ATP + H2O = L-arabinose(in) + ADP + phosphate + H(+). Its function is as follows. Part of the ABC transporter complex AraFGH involved in arabinose import. Responsible for energy coupling to the transport system. This Pseudomonas syringae pv. syringae (strain B728a) protein is Arabinose import ATP-binding protein AraG.